Reading from the N-terminus, the 78-residue chain is Large ribosomal subunit protein bL28 (78 aa).

Belongs to the bacterial ribosomal protein bL28 family.

The protein is Large ribosomal subunit protein bL28 of Pasteurella multocida (strain Pm70).